Here is a 122-residue protein sequence, read N- to C-terminus: Small ribosomal subunit protein uS13 (122 aa).

The segment at 91 to 122 (RHRRGLPVHGQRTKTNARTRKGPKRTVAGKKK) is disordered.

Belongs to the universal ribosomal protein uS13 family. In terms of assembly, part of the 30S ribosomal subunit. Forms a loose heterodimer with protein S19. Forms two bridges to the 50S subunit in the 70S ribosome.

In terms of biological role, located at the top of the head of the 30S subunit, it contacts several helices of the 16S rRNA. In the 70S ribosome it contacts the 23S rRNA (bridge B1a) and protein L5 of the 50S subunit (bridge B1b), connecting the 2 subunits; these bridges are implicated in subunit movement. Contacts the tRNAs in the A and P-sites. This chain is Small ribosomal subunit protein uS13, found in Kocuria rhizophila (strain ATCC 9341 / DSM 348 / NBRC 103217 / DC2201).